The chain runs to 82 residues: Putative membrane protein insertion efficiency factor (82 aa).

The protein belongs to the UPF0161 family.

It is found in the cell inner membrane. Its function is as follows. Could be involved in insertion of integral membrane proteins into the membrane. The polypeptide is Putative membrane protein insertion efficiency factor (Aeromonas salmonicida (strain A449)).